We begin with the raw amino-acid sequence, 1042 residues long: Atrial natriuretic peptide-converting enzyme (1042 aa).

The segment at 1–25 is disordered; sequence MKQSPALAPEERCRRAGSPKPVLRA. The Cytoplasmic portion of the chain corresponds to 1–45; it reads MKQSPALAPEERCRRAGSPKPVLRADDNNMGNGCSQKLATANLLR. The short motif at 26–29 is the DDNN motif element; it reads DDNN. A helical; Signal-anchor for type II membrane protein membrane pass occupies residues 46 to 66; sequence FLLLVLIPCICALVLLLVILL. Residues 67–1042 lie on the Extracellular side of the membrane; sequence SYVGTLQKVY…QIYIQTFLLN (976 aa). Residues Asn-80, Asn-104, Asn-135, and Asn-141 are each glycosylated (N-linked (GlcNAc...) asparagine). Residues 134–259 form the FZ 1 domain; the sequence is RNTSACMNIT…SNVSRICFSP (126 aa). Intrachain disulfides connect Cys-139–Cys-199, Cys-147–Cys-192, Cys-183–Cys-223, Cys-212–Cys-256, Cys-216–Cys-240, Cys-269–Cys-282, Cys-277–Cys-295, and Cys-289–Cys-304. N-linked (GlcNAc...) asparagine glycosylation is found at Asn-231, Asn-245, and Asn-251. LDL-receptor class A domains are found at residues 268–304, 305–340, 341–377, and 378–415; these read LCGR…EAHC, NCSE…EQNC, DCNP…EVNC, and SCHS…ENCS. Asn-305 is a glycosylation site (N-linked (GlcNAc...) asparagine). Disulfide bonds link Cys-306-Cys-318, Cys-313-Cys-331, Cys-325-Cys-340, Cys-342-Cys-355, Cys-350-Cys-368, Cys-362-Cys-377, Cys-379-Cys-392, Cys-387-Cys-405, and Cys-399-Cys-414. N-linked (GlcNAc...) asparagine glycosylation occurs at Asn-320. Residue Asn-376 is glycosylated (N-linked (GlcNAc...) asparagine). N-linked (GlcNAc...) asparagine glycosylation is found at Asn-413, Asn-446, Asn-451, and Asn-469. The 124-residue stretch at 450 to 573 folds into the FZ 2 domain; that stretch reads NNCSQCEPIT…NSDNQTCLMP (124 aa). Intrachain disulfides connect Cys-455-Cys-518, Cys-463-Cys-511, Cys-502-Cys-540, Cys-529-Cys-570, Cys-533-Cys-557, Cys-580-Cys-592, Cys-587-Cys-605, Cys-599-Cys-614, Cys-616-Cys-630, Cys-624-Cys-643, Cys-637-Cys-652, Cys-655-Cys-667, Cys-662-Cys-680, and Cys-674-Cys-689. Asn-567 is a glycosylation site (N-linked (GlcNAc...) asparagine). LDL-receptor class A domains follow at residues 579–614, 615–653, and 654–689; these read ECSP…EENC, GCKE…KNCS, and FCQD…EWDC. A glycan (N-linked (GlcNAc...) asparagine) is linked at Asn-651. Positions 690–801 constitute an SRCR domain; that stretch reads VTLSINVNSS…RRPAARMNKR (112 aa). N-linked (GlcNAc...) asparagine glycosylation is found at Asn-697 and Asn-761. 5 disulfides stabilise this stretch: Cys-790/Cys-912, Cys-828/Cys-844, Cys-926/Cys-991, Cys-955/Cys-970, and Cys-981/Cys-1010. The region spanning 802–1035 is the Peptidase S1 domain; the sequence is ILGGRTSRPG…FVEWIKRQIY (234 aa). Residues His-843 and Asp-892 each act as charge relay system in the active site. The Charge relay system role is filled by Ser-985. N-linked (GlcNAc...) asparagine glycosylation occurs at Asn-1022.

The protein belongs to the peptidase S1 family. In terms of processing, N-glycosylated; required for processing and activation. Post-translationally, activated through proteolytic processing by a trypsin-like protease; cleaved into a N-terminal propeptide and an activated corin protease fragment. Different soluble forms are produced by cleavage and autocatalytic cleavage: Atrial natriuretic peptide-converting enzyme, 180 kDa soluble fragment is produced by cleavage by ADAM10, while 160 kDa and 100 kDa soluble fragments are produced by autocatalytic cleavage. Cleavage by ADAM10 to produce soluble 180 kDa soluble fragment takes place after the transmembrane region and before FZ 1. A disulfide bond links the activated corin protease fragment and the N-terminal propeptide. The disulfide bond also links the activated corin protease fragment with soluble fragments (100 kDa, 160 kDa and 180 kDa fragments). In terms of tissue distribution, highly expressed in heart. Expressed in heart myocytes. Also expressed in pregnant uterus. Detected in blood, in plasma as well as in serum (at protein level).

The protein localises to the cell membrane. It localises to the secreted. Its activity is regulated as follows. Inhibited in a dose-dependent manner by non-specific trypsin-like serine protease inhibitors including benzamidine. Serine-type endopeptidase involved in atrial natriuretic peptide (NPPA) and brain natriuretic peptide (NPPB) processing. Converts through proteolytic cleavage the non-functional propeptides NPPA and NPPB into their active hormones, ANP and BNP(1-32) respectively, thereby regulating blood pressure in the heart and promoting natriuresis, diuresis and vasodilation. Proteolytic cleavage of pro-NPPA also plays a role in female pregnancy by promoting trophoblast invasion and spiral artery remodeling in uterus. Also acts as a regulator of sodium reabsorption in kidney. Functionally, has weaker endopeptidase activity compared to isoform 1. In Homo sapiens (Human), this protein is Atrial natriuretic peptide-converting enzyme (CORIN).